We begin with the raw amino-acid sequence, 125 residues long: Mitochondrial import inner membrane translocase subunit tim16-A (125 aa).

Residues 58–110 are J-like; that stretch reads EAQQILNVSKLTPEEIQKNYEHLFKVNDKGLGGSFYLQSKVVRAKERLDQEME.

This sequence belongs to the TIM16/PAM16 family. Probable component of the PAM complex at least composed of 1 mitochondrial HSP70 protein, 1 GRPE, 1 TIMM44, 1 TIMM16/PAM16 and 1 TIMM14. Associates with the TIM23 complex.

It is found in the mitochondrion inner membrane. Its function is as follows. Regulates ATP-dependent protein translocation into the mitochondrial matrix. In Xenopus laevis (African clawed frog), this protein is Mitochondrial import inner membrane translocase subunit tim16-A (pam16-a).